Consider the following 95-residue polypeptide: AISCGQVSSAIGPCLAYARGAGAAPSASCQSGVRSLNAAARTTADRRAACNCSLKSAASRVSGLNAGKASSIPGRCGVRLPYAISASIDCSRVNN.

Cystine bridges form between C4-C52, C14-C29, and C50-C90.

The protein belongs to the plant LTP family. As to expression, seeds.

Its function is as follows. Plant non-specific lipid-transfer proteins transfer phospholipids as well as galactolipids across membranes. May play a role in wax or cutin deposition in the cell walls of expanding epidermal cells and certain secretory tissues. The polypeptide is Non-specific lipid-transfer protein (Eleusine coracana (Indian finger millet)).